Here is a 132-residue protein sequence, read N- to C-terminus: Small ribosomal subunit protein uS8 (132 aa).

Belongs to the universal ribosomal protein uS8 family. Part of the 30S ribosomal subunit. Contacts proteins S5 and S12.

Functionally, one of the primary rRNA binding proteins, it binds directly to 16S rRNA central domain where it helps coordinate assembly of the platform of the 30S subunit. This Xanthomonas oryzae pv. oryzae (strain MAFF 311018) protein is Small ribosomal subunit protein uS8.